The primary structure comprises 100 residues: MTKSELIEVIAGKQQHLAHKDVELAVKTLLEQMSETLASGERIEIRGFGSFSLHHRPPRIGRNPKTGEPVALPGKYVPHFKPGKELRDRVNAGRHNPIQS.

A disordered region spans residues 53–100 (LHHRPPRIGRNPKTGEPVALPGKYVPHFKPGKELRDRVNAGRHNPIQS). Over residues 82 to 91 (PGKELRDRVN) the composition is skewed to basic and acidic residues.

It belongs to the bacterial histone-like protein family. As to quaternary structure, heterodimer of an alpha and a beta chain.

This protein is one of the two subunits of integration host factor, a specific DNA-binding protein that functions in genetic recombination as well as in transcriptional and translational control. The polypeptide is Integration host factor subunit beta (Alkalilimnicola ehrlichii (strain ATCC BAA-1101 / DSM 17681 / MLHE-1)).